A 178-amino-acid polypeptide reads, in one-letter code: Large ribosomal subunit protein uL10 (178 aa).

It belongs to the universal ribosomal protein uL10 family. In terms of assembly, part of the ribosomal stalk of the 50S ribosomal subunit. The N-terminus interacts with L11 and the large rRNA to form the base of the stalk. The C-terminus forms an elongated spine to which L12 dimers bind in a sequential fashion forming a multimeric L10(L12)X complex.

Forms part of the ribosomal stalk, playing a central role in the interaction of the ribosome with GTP-bound translation factors. This is Large ribosomal subunit protein uL10 from Thermosynechococcus vestitus (strain NIES-2133 / IAM M-273 / BP-1).